A 695-amino-acid polypeptide reads, in one-letter code: Parasporal crystal protein Cry18Ca (695 aa).

Belongs to the delta endotoxin family.

Functionally, binds to the brush border membrane vesicles of scarab larvae and damages the gut wall somehow to allow the vegetative cells of P.popilliae to enter the hemolymph. In Paenibacillus popilliae (Bacillus popilliae), this protein is Parasporal crystal protein Cry18Ca (cry18Ca).